Reading from the N-terminus, the 1028-residue chain is MRLLWKLVILLPLINSSAGDGLLSRPIFTQEPHDVIFPLDLSKSEVILNCAANGYPSPHYRWKQNGTDIDFTMSYHYRLDGGSLAINSPHTDQDIGMYQCLATNLLGTILSRKAKLQFAYIEDFETKTRSTVSVREGQGVVLLCGPPPHFGDLSYAWTFNDNPLYVQEDNRRFVSQETGNLYIAKVEPSDVGNYTCFITNKEAQRSVQGPPTPLVQRTDGVMGEYEPKIEVRFPETIQAAKDSSVKLECFALGNPVPDISWRRLDGSPLPGKVKYSKSQAILEIPNFQQEDEGFYECIASNLRGRNLAKGQLIFYAPPEWEQKIQNTHLSIYDNLLWECKASGKPNPWYTWLKNGERLNPEERIQIENGTLIITMLNVSDSGVYQCAAENKYQIIYANAELRVLASAPDFSKSPVKKKSFVQVGGDIVIGCKPNAFPRAAISWKRGTETLRQSKRIFLLEDGSLKIYNITRSDAGSYTCIATNQFGTAKNTGSLIVKERTVITVPPSKMDVTVGESIVLPCQVSHDPSIEVVFVWFFNGDVIDLKKGVAHFERIGGESVGDLMIRNIQLHHSGKYLCTVQTTLESLSAVADIIVRGPPGPPEDVQVEDISSTTSQLSWRAGPDNNSPIQIFTIQTRTPFSVGWQAVATVPEILNGKTYNATVVGLSPWVEYEFRVVAGNSIGIGEPSEPSELLRTKASVPVVAPVNIHGGGGSRSELVITWESIPEELQNGEGFGYIIMFRPVGSTTWSKEKVSSVESSRFVYRNESIIPLSPFEVKVGVYNNEGEGSLSTVTIVYSGEDEPQLAPRGTSLQSFSASEMEVSWNAIAWNRNTGRVLGYEVLYWTDDSKESMIGKIRVSGNVTTKNITGLKANTIYFASVRAYNTAGTGPSSPPVNVTTKKSPPSQPPANIAWKLTNSKLCLNWEHVKTMENESEVLGYKILYRQNRQSKTHILETNNTSAELLVPFEEDYLIEIRTVSDGGDGSSSEEIRIPKMSSLSSRGIQFLEPSTHFLSIVIVIFHCFAIQPLI.

The signal sequence occupies residues 1–19 (MRLLWKLVILLPLINSSAG). 6 Ig-like C2-type domains span residues 26–117 (PIFT…AKLQ), 122–208 (EDFE…RSVQ), 227–308 (PKIE…RNLA), 318–402 (PEWE…AELR), 408–495 (PDFS…GSLI), and 499–587 (RTVI…ESLS). Intrachain disulfides connect Cys50–Cys100, Cys144–Cys196, Cys249–Cys297, Cys339–Cys386, Cys431–Cys479, and Cys521–Cys577. Residues Asn65 and Asn193 are each glycosylated (N-linked (GlcNAc...) asparagine). 3 N-linked (GlcNAc...) asparagine glycosylation sites follow: Asn368, Asn377, and Asn468. 4 consecutive Fibronectin type-III domains span residues 600-698 (PPED…TKAS), 703-800 (APVN…SGED), 805-901 (APRG…TKKS), and 902-996 (PPSQ…KMSS). N-linked (GlcNAc...) asparagine glycosylation is found at Asn659, Asn765, Asn860, and Asn865. Position 882 is a phosphotyrosine (Tyr882). A compositionally biased stretch (polar residues) spans 887–902 (TGPSSPPVNVTTKKSP). The segment at 887–908 (TGPSSPPVNVTTKKSPPSQPPA) is disordered. Asn895, Asn931, Asn956, and Asn957 each carry an N-linked (GlcNAc...) asparagine glycan. Ser999 carries GPI-anchor amidated serine lipidation. Positions 1000–1028 (RGIQFLEPSTHFLSIVIVIFHCFAIQPLI) are cleaved as a propeptide — removed in mature form.

It belongs to the immunoglobulin superfamily. Contactin family. Interacts with PTPRG. In terms of tissue distribution, expressed in nervous system. Highly expressed in cerebellum. Expressed at intermediate level in thalamus, subthalamic nucleus. Weakly expressed in corpus callosum, caudate nucleus and spinal cord.

The protein localises to the cell membrane. Functionally, contactins mediate cell surface interactions during nervous system development. Participates in oligodendrocytes generation by acting as a ligand of NOTCH1. Its association with NOTCH1 promotes NOTCH1 activation through the released notch intracellular domain (NICD) and subsequent translocation to the nucleus. Involved in motor coordination. The protein is Contactin-6 (CNTN6) of Homo sapiens (Human).